Reading from the N-terminus, the 246-residue chain is Cytochrome c oxidase subunit 2 (246 aa).

2 consecutive transmembrane segments (helical) span residues His-31–Met-51 and Ile-72–Leu-92. The Cu cation site is built by His-175, Cys-210, Glu-212, Cys-214, His-218, and Met-221. Glu-212 serves as a coordination point for Mg(2+).

The protein belongs to the cytochrome c oxidase subunit 2 family. In terms of assembly, component of the cytochrome c oxidase (complex IV, CIV), a multisubunit enzyme composed of a catalytic core of 3 subunits and several supernumerary subunits. The complex exists as a monomer or a dimer and forms supercomplexes (SCs) in the inner mitochondrial membrane with ubiquinol-cytochrome c oxidoreductase (cytochrome b-c1 complex, complex III, CIII). Cu cation is required as a cofactor.

It is found in the mitochondrion inner membrane. The catalysed reaction is 4 Fe(II)-[cytochrome c] + O2 + 8 H(+)(in) = 4 Fe(III)-[cytochrome c] + 2 H2O + 4 H(+)(out). Functionally, component of the cytochrome c oxidase, the last enzyme in the mitochondrial electron transport chain which drives oxidative phosphorylation. The respiratory chain contains 3 multisubunit complexes succinate dehydrogenase (complex II, CII), ubiquinol-cytochrome c oxidoreductase (cytochrome b-c1 complex, complex III, CIII) and cytochrome c oxidase (complex IV, CIV), that cooperate to transfer electrons derived from NADH and succinate to molecular oxygen, creating an electrochemical gradient over the inner membrane that drives transmembrane transport and the ATP synthase. Cytochrome c oxidase is the component of the respiratory chain that catalyzes the reduction of oxygen to water. Electrons originating from reduced cytochrome c in the intermembrane space (IMS) are transferred via the dinuclear copper A center (CU(A)) of subunit 2 and heme A of subunit 1 to the active site in subunit 1, a binuclear center (BNC) formed by heme A3 and copper B (CU(B)). The BNC reduces molecular oxygen to 2 water molecules using 4 electrons from cytochrome c in the IMS and 4 protons from the mitochondrial matrix. The chain is Cytochrome c oxidase subunit 2 (COX2) from Debaryomyces hansenii (strain ATCC 36239 / CBS 767 / BCRC 21394 / JCM 1990 / NBRC 0083 / IGC 2968) (Yeast).